The following is a 312-amino-acid chain: Mas-related G-protein coupled receptor member E (312 aa).

The Extracellular segment spans residues 1–20; the sequence is MMEPREAGQHVGAANGAQED. The helical transmembrane segment at 21–41 threads the bilayer; sequence VAFNLIILSLTEGLGLGGLLG. Over 42–59 the chain is Cytoplasmic; it reads NGAVLWLLSSNVYRNPFA. Residues 60–80 form a helical membrane-spanning segment; that stretch reads IYLLDVACADLIFLGCHMVAI. Topologically, residues 81–106 are extracellular; that stretch reads VPDLLQGRLDFPGFVQTSLATLRFFC. Residues 107–127 traverse the membrane as a helical segment; that stretch reads YIVGLSLLAAVSVEQCLAALF. The Cytoplasmic segment spans residues 128-141; it reads PAWYSCRRPRHLTT. The chain crosses the membrane as a helical span at residues 142-162; it reads CVCALTWALCLLLHLLLSGAC. The Extracellular portion of the chain corresponds to 163–176; that stretch reads TQFFGEPSRHLCRT. The chain crosses the membrane as a helical span at residues 177 to 197; the sequence is LWLVAAVLLALLCCTMCGASL. Topologically, residues 198 to 217 are cytoplasmic; it reads MLLLRVERGPQRPPPRGFPG. A helical membrane pass occupies residues 218 to 238; it reads LILLTVLLFLFCGLPFGIYWL. The Extracellular segment spans residues 239–241; it reads SRN. The chain crosses the membrane as a helical span at residues 242–262; sequence LLWYIPHYFYHFSFLMAAVHC. Residues 263–312 are Cytoplasmic-facing; sequence AAKPVVYFCLGSAQGRRLPLRLVLQRALGDEAELGAVRETSRRGLVDIAA.

The protein belongs to the G-protein coupled receptor 1 family. Mas subfamily.

Its subcellular location is the cell membrane. Orphan receptor. May regulate nociceptor function and/or development, including the sensation or modulation of pain. The protein is Mas-related G-protein coupled receptor member E (MRGPRE) of Homo sapiens (Human).